The following is a 114-amino-acid chain: UPF0102 protein CD630_12710 (114 aa).

This sequence belongs to the UPF0102 family.

This chain is UPF0102 protein CD630_12710, found in Clostridioides difficile (strain 630) (Peptoclostridium difficile).